A 231-amino-acid polypeptide reads, in one-letter code: 4-aminobenzoate synthase (231 aa).

Residues E81, H88, E142, H174, D178, and H181 each coordinate Fe(2+).

Belongs to the CADD family. Homodimer. During infection, interacts with death domains of mammalian tumor necrosis factor (TNF) family receptors Fas, DR4, DR5 and to some extent TNFR1, but not with the respective downstream adapters. Fe(2+) is required as a cofactor. Requires Mn(2+) as cofactor.

The protein localises to the secreted. It is found in the host cytoplasm. Its activity is regulated as follows. The protein is a cosubstrate rather than a true enzyme and is left in an inactive state after a single turnover. Inactive under anaerobic conditions. Its function is as follows. Involved in de novo para-aminobenzoate (PABA) biosynthesis. Acts as a self-sacrificing or 'suicide' enzyme that utilizes its own active site tyrosine residue(s) as the substrate for PABA synthesis. The side chain of the tyrosine residue is released from the protein backbone via cleavage of the C(alpha)-C(beta) bond, leaving a glycine in place of the original tyrosine residue. Reaction requires O(2) and a reduced dimetal cofactor. Was also identified as a specific toxin that associates with death domains of tumor necrosis factor family (TNF) receptors and induces apoptosis in mammalian cell lines through a Caspase-dependent mechanism. The polypeptide is 4-aminobenzoate synthase (Chlamydia trachomatis serovar D (strain ATCC VR-885 / DSM 19411 / UW-3/Cx)).